A 283-amino-acid polypeptide reads, in one-letter code: MDQKIIQLSNNVQVANDKPFVLFGGMNVLESRDLAMSIAEHYVEVTQKLGIPYVFKASFDKANRSSVNSYRGPGMEEGLRIFEEIKSTFNVPMITDVHEIHQCAPVAEVVDIIQLPAFLARQTDLVVAMAKTGAVINVKKPQFLAPHEMRHIITKFNEAGNDNIILCERGSSFGYNNLVVDMLGMDEMKQTGYPVIFDATHALQRPGGRADSAGGRRAQATELARSGMALGLAGLFIEAHPDPDNAKCDGPCALPLHLLEKYLTQMKAVDELVKSFEFIDTSK.

It belongs to the KdsA family.

It is found in the cytoplasm. The enzyme catalyses D-arabinose 5-phosphate + phosphoenolpyruvate + H2O = 3-deoxy-alpha-D-manno-2-octulosonate-8-phosphate + phosphate. The protein operates within carbohydrate biosynthesis; 3-deoxy-D-manno-octulosonate biosynthesis; 3-deoxy-D-manno-octulosonate from D-ribulose 5-phosphate: step 2/3. It participates in bacterial outer membrane biogenesis; lipopolysaccharide biosynthesis. This Shewanella frigidimarina (strain NCIMB 400) protein is 2-dehydro-3-deoxyphosphooctonate aldolase.